Reading from the N-terminus, the 451-residue chain is Phenolic glucoside malonyltransferase 2 (451 aa).

His165 serves as the catalytic Proton acceptor. Residues 165–169 (HAVLD) carry the HXXXD motif motif. Malonyl-CoA is bound by residues His270 and 272 to 273 (ST). Asp395 (proton acceptor) is an active-site residue. The DFGWG motif motif lies at 395-399 (DFGWG).

This sequence belongs to the plant acyltransferase family. Phenolic glucoside malonyltransferase subfamily.

The enzyme catalyses a flavonol 7-O-beta-D-glucoside + malonyl-CoA = a flavonol 7-O-(6-O-malonyl-beta-D-glucoside) + CoA. Its function is as follows. Malonyltransferase acting on xenobiotic glucosides. Has activity toward 2-Naphthol glucoside (2NAG), 1-Naphthol glucoside (1NAG), kaempferol 7-O-glucoside, hydroxycoumarin glucosides and phenol-glucosides, but not toward kaempferol 3-O-glucoside or daidzin. Prefers phenol glucosides rather than naphtol glucosides. In vivo, seems to be involved in the malonylation of 4-methylumbelliferone glucoside or 4-nitrophenyl glucoside while PMAT1 would be involved in the malonylation of 2-Naphthol glucoside. This chain is Phenolic glucoside malonyltransferase 2 (PMAT2), found in Arabidopsis thaliana (Mouse-ear cress).